The following is a 784-amino-acid chain: Protein DBF4 homolog B (784 aa).

The region spanning 27-117 (CREITFAGKS…SRGKQLLKKV (91 aa)) is the BRCT domain. The interval 222 to 243 (TVKKKDPGDQEEEEGQRSQKPQ) is disordered. A DBF4-type zinc finger spans residues 244–293 (ARKRKGYCECCEETFDTLSEHLVGEHHFRFVSNPLSYKMIDDLAAQLTCD). Residues cysteine 251, cysteine 254, histidine 264, and histidine 270 each contribute to the Zn(2+) site. Disordered stretches follow at residues 299–332 (FGSP…GNEG), 348–368 (HADC…AEEP), and 495–529 (TVGS…AQPA). Residues 498 to 507 (SQGDVTSHSA) show a composition bias toward polar residues.

In terms of assembly, forms a complex with cdc7. Phosphorylated. Stably phosphorylated throughout the cell cycle.

The protein resides in the nucleus. Functionally, regulatory subunit for cdc7 which activates its kinase activity thereby playing a central role in DNA replication and cell proliferation. Specifically required during the initiation of DNA replication in egg and during early embryonic development. The complex cdc7-dbf4b phosphorylates mcm2 and mcm4 subunits and is required for cdc45 loading. The sequence is that of Protein DBF4 homolog B (dbf4b) from Xenopus laevis (African clawed frog).